Here is a 489-residue protein sequence, read N- to C-terminus: 3-octaprenyl-4-hydroxybenzoate carboxy-lyase (489 aa).

A Mn(2+)-binding site is contributed by Asn172. Prenylated FMN is bound by residues 175 to 177, 189 to 191, and 194 to 195; these read VYR, RWL, and RG. Residue Glu240 coordinates Mn(2+). Residue Asp288 is the Proton donor of the active site.

Belongs to the UbiD family. In terms of assembly, homohexamer. Prenylated FMN serves as cofactor. The cofactor is Mn(2+).

The protein localises to the cell membrane. It catalyses the reaction a 4-hydroxy-3-(all-trans-polyprenyl)benzoate + H(+) = a 2-(all-trans-polyprenyl)phenol + CO2. It participates in cofactor biosynthesis; ubiquinone biosynthesis. Its function is as follows. Catalyzes the decarboxylation of 3-octaprenyl-4-hydroxy benzoate to 2-octaprenylphenol, an intermediate step in ubiquinone biosynthesis. In Wigglesworthia glossinidia brevipalpis, this protein is 3-octaprenyl-4-hydroxybenzoate carboxy-lyase.